The primary structure comprises 685 residues: Polyphosphate kinase (685 aa).

Asn45 is a binding site for ATP. Positions 372 and 402 each coordinate Mg(2+). The region spanning Pro427–Thr461 is the PLD phosphodiesterase 1 domain. His432 functions as the Phosphohistidine intermediate in the catalytic mechanism. Positions 465, 561, and 589 each coordinate ATP. The 31-residue stretch at Asp584–Asn614 folds into the PLD phosphodiesterase 2 domain.

Belongs to the polyphosphate kinase 1 (PPK1) family. Mg(2+) is required as a cofactor. An intermediate of this reaction is the autophosphorylated ppk in which a phosphate is covalently linked to a histidine residue through a N-P bond.

It carries out the reaction [phosphate](n) + ATP = [phosphate](n+1) + ADP. In terms of biological role, catalyzes the reversible transfer of the terminal phosphate of ATP to form a long-chain polyphosphate (polyP). The protein is Polyphosphate kinase of Klebsiella pneumoniae.